The following is a 198-amino-acid chain: Holliday junction branch migration complex subunit RuvA (198 aa).

The interval Met-1–Leu-63 is domain I. The domain II stretch occupies residues Asp-64 to Ser-142. A flexible linker region spans residues Ala-143–Ser-150. The interval Ser-150–Arg-198 is domain III.

This sequence belongs to the RuvA family. As to quaternary structure, homotetramer. Forms an RuvA(8)-RuvB(12)-Holliday junction (HJ) complex. HJ DNA is sandwiched between 2 RuvA tetramers; dsDNA enters through RuvA and exits via RuvB. An RuvB hexamer assembles on each DNA strand where it exits the tetramer. Each RuvB hexamer is contacted by two RuvA subunits (via domain III) on 2 adjacent RuvB subunits; this complex drives branch migration. In the full resolvosome a probable DNA-RuvA(4)-RuvB(12)-RuvC(2) complex forms which resolves the HJ.

The protein localises to the cytoplasm. In terms of biological role, the RuvA-RuvB-RuvC complex processes Holliday junction (HJ) DNA during genetic recombination and DNA repair, while the RuvA-RuvB complex plays an important role in the rescue of blocked DNA replication forks via replication fork reversal (RFR). RuvA specifically binds to HJ cruciform DNA, conferring on it an open structure. The RuvB hexamer acts as an ATP-dependent pump, pulling dsDNA into and through the RuvAB complex. HJ branch migration allows RuvC to scan DNA until it finds its consensus sequence, where it cleaves and resolves the cruciform DNA. The polypeptide is Holliday junction branch migration complex subunit RuvA (Deinococcus geothermalis (strain DSM 11300 / CIP 105573 / AG-3a)).